The sequence spans 246 residues: Acetoacetate decarboxylase (246 aa).

Residue lysine 116 is the Schiff-base intermediate with acetoacetate of the active site.

This sequence belongs to the ADC family.

The catalysed reaction is acetoacetate + H(+) = acetone + CO2. Functionally, catalyzes the conversion of acetoacetate to acetone and carbon dioxide. This Burkholderia cenocepacia (strain HI2424) protein is Acetoacetate decarboxylase.